A 355-amino-acid chain; its full sequence is Ion-translocating oxidoreductase complex subunit D (355 aa).

The next 5 helical transmembrane spans lie at Gly-13–Val-33, Val-35–Ile-55, Val-77–Ile-97, Leu-98–Asn-118, and Val-128–Leu-148. FMN phosphoryl threonine is present on Thr-186. The next 5 membrane-spanning stretches (helical) occupy residues Ala-216 to Trp-236, Pro-245 to Ala-265, Ala-267 to Ala-287, Pro-294 to Ile-314, and Gly-318 to Ile-338.

Belongs to the NqrB/RnfD family. In terms of assembly, the complex is composed of six subunits: RnfA, RnfB, RnfC, RnfD, RnfE and RnfG. Requires FMN as cofactor.

The protein resides in the cell inner membrane. In terms of biological role, part of a membrane-bound complex that couples electron transfer with translocation of ions across the membrane. This Actinobacillus succinogenes (strain ATCC 55618 / DSM 22257 / CCUG 43843 / 130Z) protein is Ion-translocating oxidoreductase complex subunit D.